Reading from the N-terminus, the 212-residue chain is Adenylate kinase (212 aa).

An ATP-binding site is contributed by 10–15 (GAGKGT). The segment at 30-59 (AIGDIFRTIIKTSTSEAELINNYVKQGELI) is NMP. Residues R36, 57–59 (ELI), 85–88 (GYPR), and Q92 contribute to the AMP site. The LID stretch occupies residues 122 to 160 (GRYSCKNCGKIYNRYFVQPKTDNVCDVCGSSTFDYRKDD). R123 is a binding site for ATP. Zn(2+)-binding residues include C126 and C129. 132–133 (IY) serves as a coordination point for ATP. Zn(2+) is bound by residues C146 and C149. AMP is bound by residues R157 and R168. K196 serves as a coordination point for ATP.

It belongs to the adenylate kinase family. As to quaternary structure, monomer.

It is found in the cytoplasm. It catalyses the reaction AMP + ATP = 2 ADP. Its pathway is purine metabolism; AMP biosynthesis via salvage pathway; AMP from ADP: step 1/1. In terms of biological role, catalyzes the reversible transfer of the terminal phosphate group between ATP and AMP. Plays an important role in cellular energy homeostasis and in adenine nucleotide metabolism. This is Adenylate kinase from Rickettsia conorii (strain ATCC VR-613 / Malish 7).